A 288-amino-acid polypeptide reads, in one-letter code: 33 kDa chaperonin (288 aa).

Disulfide bonds link C225–C227 and C258–C261.

This sequence belongs to the HSP33 family. Under oxidizing conditions two disulfide bonds are formed involving the reactive cysteines. Under reducing conditions zinc is bound to the reactive cysteines and the protein is inactive.

It localises to the cytoplasm. Functionally, redox regulated molecular chaperone. Protects both thermally unfolding and oxidatively damaged proteins from irreversible aggregation. Plays an important role in the bacterial defense system toward oxidative stress. The sequence is that of 33 kDa chaperonin from Shewanella denitrificans (strain OS217 / ATCC BAA-1090 / DSM 15013).